A 502-amino-acid polypeptide reads, in one-letter code: MVNQTHEFLLEMTGVSKEFPGVKALDKVNLKVRPHSVHALMGENGAGKSTLLKCLFGIYEKDEGDIIFLGQHVNFSSSKEALESGVSMVHQELNQVKQCSVMDNIWLGRYPTKGFFVDHDKMYRDTKAIFAELDIDIDPKVKVATLSVSQMQMLEIAKAFSYDAKVVIMDEPTSSLTEKEVNHLFTIIKKLKEKGCGVVYISHKMEEIFSICDEITILRDGQWVDTRPLKGLDMDKIISMMVGRELTQRFPEKSNEPKNVILEVKNLTALNQPSIQDISFELRAGEILGVAGLVGSRRTDIVETIFGVRERSAGHILLHGREMKNHDAHEAIRNGFALVTEERRSTGIYSNLDITFNSLVANVDEYKTPYGLLSDKKMKSDTQWVIDSMRVKTPSHQTHIGSLSGGNQQKVIIGRWLLTQPEILMLDEPTRGIDVGAKYEIYQLILELAKKDKGIIIISSEMPELLGITDRIMVMSNGRNAGIVNTKQTSQNEILELASRYL.

ABC transporter domains follow at residues 10–245 (LEMT…VGRE) and 255–502 (NEPK…SRYL). Residue 42-49 (GENGAGKS) coordinates ATP.

The protein belongs to the ABC transporter superfamily. Galactose/methyl galactoside importer (TC 3.A.1.2.3) family. As to quaternary structure, the complex is composed of one ATP-binding protein (MglA), two transmembrane proteins (MglC) and a solute-binding protein (MglB).

The protein localises to the cell inner membrane. The enzyme catalyses D-galactose(out) + ATP + H2O = D-galactose(in) + ADP + phosphate + H(+). The catalysed reaction is methyl beta-D-galactoside(out) + ATP + H2O = methyl beta-D-galactoside(in) + ADP + phosphate + H(+). In terms of biological role, part of the ABC transporter complex MglABC involved in galactose/methyl galactoside import. Responsible for energy coupling to the transport system. The sequence is that of Galactose/methyl galactoside import ATP-binding protein MglA from Vibrio cholerae serotype O1 (strain ATCC 39315 / El Tor Inaba N16961).